We begin with the raw amino-acid sequence, 78 residues long: MASLIQVRDLLALRSRMEAAQISQTLNTPQPMINAMLQQLESMGKAVRIQEEPDGCLSGSCKSCPEGKACLREWWALR.

Iron-sulfur cluster is bound by residues cysteine 56, cysteine 61, cysteine 64, and cysteine 70.

This sequence belongs to the FeoC family.

Functionally, may function as a transcriptional regulator that controls feoABC expression. This Escherichia coli O127:H6 (strain E2348/69 / EPEC) protein is Probable [Fe-S]-dependent transcriptional repressor.